The following is a 273-amino-acid chain: 3-methyl-2-oxobutanoate hydroxymethyltransferase (273 aa).

Positions 53 and 92 each coordinate Mg(2+). 3-methyl-2-oxobutanoate-binding positions include 53–54, Asp-92, and Lys-120; that span reads DS. A Mg(2+)-binding site is contributed by Glu-122. Glu-189 acts as the Proton acceptor in catalysis.

Belongs to the PanB family. As to quaternary structure, homodecamer; pentamer of dimers. The cofactor is Mg(2+).

It localises to the cytoplasm. The enzyme catalyses 3-methyl-2-oxobutanoate + (6R)-5,10-methylene-5,6,7,8-tetrahydrofolate + H2O = 2-dehydropantoate + (6S)-5,6,7,8-tetrahydrofolate. It functions in the pathway cofactor biosynthesis; (R)-pantothenate biosynthesis; (R)-pantoate from 3-methyl-2-oxobutanoate: step 1/2. Catalyzes the reversible reaction in which hydroxymethyl group from 5,10-methylenetetrahydrofolate is transferred onto alpha-ketoisovalerate to form ketopantoate. This chain is 3-methyl-2-oxobutanoate hydroxymethyltransferase, found in Cupriavidus necator (strain ATCC 17699 / DSM 428 / KCTC 22496 / NCIMB 10442 / H16 / Stanier 337) (Ralstonia eutropha).